A 235-amino-acid polypeptide reads, in one-letter code: Segregation and condensation protein A (235 aa).

The protein belongs to the ScpA family. As to quaternary structure, component of a cohesin-like complex composed of ScpA, ScpB and the Smc homodimer, in which ScpA and ScpB bind to the head domain of Smc. The presence of the three proteins is required for the association of the complex with DNA.

It is found in the cytoplasm. In terms of biological role, participates in chromosomal partition during cell division. May act via the formation of a condensin-like complex containing Smc and ScpB that pull DNA away from mid-cell into both cell halves. This is Segregation and condensation protein A from Streptococcus equi subsp. zooepidemicus (strain MGCS10565).